The following is a 304-amino-acid chain: Galactofuranosyltransferase GlfT1 (304 aa).

This sequence belongs to the glycosyltransferase 2 family. In terms of assembly, is probably part of an AG biosynthetic complex.

Its subcellular location is the cell membrane. The protein resides in the secreted. It is found in the cell wall. The enzyme catalyses alpha-L-rhamnosyl-(1-&gt;3)-N-acetyl-alpha-D-glucosaminyl-diphospho-trans,octa-cis-decaprenol + 2 UDP-alpha-D-galactofuranose = beta-D-galactofuranosyl-(1-&gt;5)-beta-D-galactofuranosyl-(1-&gt;4)-alpha-L-rhamnosyl-(1-&gt;3)-N-acetyl-alpha-D-glucosaminyl-diphospho-trans,octa-cis-decaprenol + 2 UDP + 2 H(+). It functions in the pathway cell wall biogenesis; cell wall polysaccharide biosynthesis. Functionally, involved in the biosynthesis of the arabinogalactan (AG) region of the mycolylarabinogalactan-peptidoglycan (mAGP) complex, an essential component of the mycobacterial cell wall. Catalyzes the transfer of the first two galactofuranosyl (Galf) units from UDP-galactofuranose (UDP-Galf) onto the rhamnosyl-GlcNAc-diphospho-decaprenol (Rha-GlcNAc-PP-C50) acceptor, yielding galactofuranosyl-galactofuranosyl-rhamnosyl-GlcNAc-diphospho-decaprenol (Galf-Galf-Rha-GlcNAc-PP-C50). Thus, GlfT1 is the initiator of galactan synthesis, while GlfT2 continues with the subsequent polymerization events. The chain is Galactofuranosyltransferase GlfT1 from Mycobacterium tuberculosis (strain CDC 1551 / Oshkosh).